The sequence spans 247 residues: 2,3-bisphosphoglycerate-dependent phosphoglycerate mutase (247 aa).

Residues 13-20 (RHGESDWN), 26-27 (TG), Arg-65, 92-95 (ERHY), Lys-103, 119-120 (RR), and 186-187 (GN) contribute to the substrate site. The Tele-phosphohistidine intermediate role is filled by His-14. Glu-92 (proton donor/acceptor) is an active-site residue.

This sequence belongs to the phosphoglycerate mutase family. BPG-dependent PGAM subfamily. Homotetramer, dimer of dimers.

It catalyses the reaction (2R)-2-phosphoglycerate = (2R)-3-phosphoglycerate. It participates in carbohydrate degradation; glycolysis; pyruvate from D-glyceraldehyde 3-phosphate: step 3/5. Catalyzes the interconversion of 2-phosphoglycerate and 3-phosphoglycerate. The chain is 2,3-bisphosphoglycerate-dependent phosphoglycerate mutase from Mycobacterium leprae (strain Br4923).